The sequence spans 807 residues: Glycerol-3-phosphate acyltransferase (807 aa).

The short motif at 308–313 (CHRSHM) is the HXXXXD motif element.

Belongs to the GPAT/DAPAT family.

The protein localises to the cell inner membrane. The catalysed reaction is sn-glycerol 3-phosphate + an acyl-CoA = a 1-acyl-sn-glycero-3-phosphate + CoA. It functions in the pathway phospholipid metabolism; CDP-diacylglycerol biosynthesis; CDP-diacylglycerol from sn-glycerol 3-phosphate: step 1/3. The polypeptide is Glycerol-3-phosphate acyltransferase (Shewanella baltica (strain OS155 / ATCC BAA-1091)).